Here is a 281-residue protein sequence, read N- to C-terminus: UDP-N-acetylenolpyruvoylglucosamine reductase (281 aa).

Residues 17 to 180 (VGGKAKKLII…LSATFKFDNG (164 aa)) form the FAD-binding PCMH-type domain. Residue Arg159 is part of the active site. Ser206 functions as the Proton donor in the catalytic mechanism. The active site involves Glu276.

Belongs to the MurB family. FAD is required as a cofactor.

It localises to the cytoplasm. The enzyme catalyses UDP-N-acetyl-alpha-D-muramate + NADP(+) = UDP-N-acetyl-3-O-(1-carboxyvinyl)-alpha-D-glucosamine + NADPH + H(+). It participates in cell wall biogenesis; peptidoglycan biosynthesis. In terms of biological role, cell wall formation. The polypeptide is UDP-N-acetylenolpyruvoylglucosamine reductase (Fusobacterium nucleatum subsp. nucleatum (strain ATCC 25586 / DSM 15643 / BCRC 10681 / CIP 101130 / JCM 8532 / KCTC 2640 / LMG 13131 / VPI 4355)).